The following is a 538-amino-acid chain: uncharacterized protein (538 aa).

A compositionally biased stretch (low complexity) spans 1-13; that stretch reads MYNNNSSTSSDSS. Residues 1 to 43 are disordered; the sequence is MYNNNSSTSSDSSNSEEKANAQHASSTDSTSEHTDPAVADEGF. The next 12 membrane-spanning stretches (helical) occupy residues 97-117, 134-154, 163-183, 194-214, 226-246, 254-274, 328-348, 367-387, 408-428, 434-454, 458-478, and 504-524; these read ILHV…SSVF, VALL…ILWA, KIPL…VAVA, FFSG…FADM, IFAC…GFLA, WTEY…LFMK, PIVF…YLLL, ALPY…IAYF, LPPM…LAWS, VHWI…LTIF, LIYL…ANTI, and GSLL…FFIF.

It belongs to the major facilitator superfamily. CAR1 family.

It is found in the endoplasmic reticulum. Its subcellular location is the membrane. This is an uncharacterized protein from Schizosaccharomyces pombe (strain 972 / ATCC 24843) (Fission yeast).